A 33-amino-acid polypeptide reads, in one-letter code: Photosystem II reaction center protein Psb30 (33 aa).

A helical membrane pass occupies residues 5 to 25 (LITQLASLILIVASGPIVIGL).

Belongs to the Psb30/Ycf12 family. As to quaternary structure, PSII is composed of 1 copy each of membrane proteins PsbA, PsbB, PsbC, PsbD, PsbE, PsbF, PsbH, PsbI, PsbJ, PsbK, PsbL, PsbM, PsbT, PsbX, PsbY, PsbZ, Psb30/Ycf12, peripheral proteins of the oxygen-evolving complex and a large number of cofactors. It forms dimeric complexes.

It is found in the plastid. It localises to the chloroplast thylakoid membrane. In terms of biological role, a core subunit of photosystem II (PSII), probably helps stabilize the reaction center. The sequence is that of Photosystem II reaction center protein Psb30 from Lepocinclis buetschlii.